Here is a 548-residue protein sequence, read N- to C-terminus: mRNA cleavage and polyadenylation factor CLP1 (548 aa).

ATP-binding positions include Glu-19, Lys-60, and 123-128 (SSGKTT). The span at 437 to 481 (ESEVKEEVKEEKNEKDGEIKQDGEGEKKGEGKGEGEGEGEGKYGE) shows a compositional bias: basic and acidic residues. The interval 437 to 500 (ESEVKEEVKE…DEEEVPFREE (64 aa)) is disordered. Residues 482-494 (EEGEAEGEDDEEE) show a composition bias toward acidic residues.

This sequence belongs to the Clp1 family. Clp1 subfamily. As to quaternary structure, component of a pre-mRNA cleavage factor complex. Interacts directly with PCF11.

The protein resides in the nucleus. Functionally, required for endonucleolytic cleavage during polyadenylation-dependent pre-mRNA 3'-end formation. In Cryptococcus neoformans var. neoformans serotype D (strain B-3501A) (Filobasidiella neoformans), this protein is mRNA cleavage and polyadenylation factor CLP1.